Consider the following 47-residue polypeptide: Large ribosomal subunit protein bL36A (47 aa).

Belongs to the bacterial ribosomal protein bL36 family.

The polypeptide is Large ribosomal subunit protein bL36A (Yersinia enterocolitica serotype O:8 / biotype 1B (strain NCTC 13174 / 8081)).